The following is a 154-amino-acid chain: UPF0127 protein TSIB_1463 (154 aa).

It belongs to the UPF0127 family.

This chain is UPF0127 protein TSIB_1463, found in Thermococcus sibiricus (strain DSM 12597 / MM 739).